The chain runs to 38 residues: Large ribosomal subunit protein bL36 (38 aa).

This sequence belongs to the bacterial ribosomal protein bL36 family.

The chain is Large ribosomal subunit protein bL36 from Pelodictyon phaeoclathratiforme (strain DSM 5477 / BU-1).